Reading from the N-terminus, the 1133-residue chain is Roquin-1 (1133 aa).

Cysteine 14, cysteine 17, cysteine 33, histidine 35, cysteine 38, cysteine 50, and aspartate 53 together coordinate Zn(2+). An RING-type; degenerate zinc finger spans residues cysteine 14–glutamine 54. The interval glycine 89–histidine 173 is HEPN-N. Positions glutamine 174–threonine 326 are ROQ. Residues proline 327–glutamine 396 form an HEPN-C region. The segment at lysine 413–glutamate 441 adopts a C3H1-type zinc-finger fold. Phosphoserine occurs at positions 462, 531, 535, and 863. The segment at threonine 505–serine 542 is disordered. Disordered regions lie at residues asparagine 1000–methionine 1019, asparagine 1058–aspartate 1078, and glutamine 1094–proline 1133. The span at glutamine 1007–tryptophan 1016 shows a compositional bias: pro residues. Positions asparagine 1058–proline 1070 are enriched in polar residues. Low complexity predominate over residues asparagine 1096–serine 1110. Serine 1110 carries the phosphoserine modification. The segment covering asparagine 1119–proline 1133 has biased composition (polar residues).

Able to homodimerize. Interacts with DDX6 and EDC4. Interacts with CCR4-NOT deadenylase complex. Interacts with RC3H1; the interaction is RNA independent. Proteolytically cleaved after Arg-510 and Arg-579 by MALT1 in activated CD4(+) T cells; cleavage at Arg-510 and Arg-579 is critical for promoting RC3H1 degradation in response to T-cell receptor (TCR) stimulation, and hence is necessary for prolonging the stability of a set of mRNAs controlling Th17 cell differentiation. As to expression, widely expressed. Expressed at higher level in cerebellum, spleen, ovary and liver.

Its subcellular location is the cytoplasm. The protein localises to the P-body. The protein resides in the cytoplasmic granule. It catalyses the reaction S-ubiquitinyl-[E2 ubiquitin-conjugating enzyme]-L-cysteine + [acceptor protein]-L-lysine = [E2 ubiquitin-conjugating enzyme]-L-cysteine + N(6)-ubiquitinyl-[acceptor protein]-L-lysine.. The protein operates within protein modification; protein ubiquitination. Post-transcriptional repressor of mRNAs containing a conserved stem loop motif, called constitutive decay element (CDE), which is often located in the 3'-UTR, as in HMGXB3, ICOS, IER3, NFKBID, NFKBIZ, PPP1R10, TNF, TNFRSF4 and in many more mRNAs. Cleaves translationally inactive mRNAs harboring a stem-loop (SL), often located in their 3'-UTRs, during the early phase of inflammation in a helicase UPF1-independent manner. Binds to CDE and promotes mRNA deadenylation and degradation. This process does not involve miRNAs. In follicular helper T (Tfh) cells, represses of ICOS and TNFRSF4 expression, thus preventing spontaneous Tfh cell differentiation, germinal center B-cell differentiation in the absence of immunization and autoimmunity. In resting or LPS-stimulated macrophages, controls inflammation by suppressing TNF expression. Also recognizes CDE in its own mRNA and in that of paralogous RC3H2, possibly leading to feedback loop regulation. Recognizes and binds mRNAs containing a hexaloop stem-loop motif, called alternative decay element (ADE). Together with ZC3H12A, destabilizes TNFRSF4/OX40 mRNA by binding to the conserved stem loop structure in its 3'UTR. Able to interact with double-stranded RNA (dsRNA). miRNA-binding protein that regulates microRNA homeostasis. Enhances DICER-mediated processing of pre-MIR146a but reduces mature MIR146a levels through an increase of 3' end uridylation. Both inhibits ICOS mRNA expression and they may act together to exert the suppression. Acts as a ubiquitin E3 ligase. Pairs with E2 enzymes UBE2A, UBE2B, UBE2D2, UBE2F, UBE2G1, UBE2G2 and UBE2L3 and produces polyubiquitin chains. Shows the strongest activity when paired with UBE2N:UBE2V1 or UBE2N:UBE2V2 E2 complexes and generate both short and long polyubiquitin chains. This chain is Roquin-1, found in Homo sapiens (Human).